The sequence spans 382 residues: Protein-arginine rhamnosyltransferase (382 aa).

18–19 (FG) serves as a coordination point for dTDP. Asp20 functions as the Proton acceptor in the catalytic mechanism. DTDP-beta-L-rhamnose contacts are provided by residues Asp20, Tyr187, 250–252 (VPQ), and 268–272 (RGEDS). DTDP is bound by residues Tyr187, 250 to 252 (VPQ), and 268 to 272 (RGEDS). Residue Glu270 is part of the active site.

It belongs to the glycosyltransferase 104 family.

The enzyme catalyses dTDP-beta-L-rhamnose + L-arginyl-[protein] = N(omega)-(alpha-L-rhamnosyl)-L-arginyl-[protein] + dTDP + H(+). In terms of biological role, protein-arginine rhamnosyltransferase that catalyzes the transfer of a single rhamnose to elongation factor P (EF-P) on 'Lys-32', a modification required for EF-P-dependent rescue of polyproline stalled ribosomes. The chain is Protein-arginine rhamnosyltransferase from Neisseria meningitidis serogroup B / serotype 15 (strain H44/76).